We begin with the raw amino-acid sequence, 261 residues long: Serine/arginine-rich splicing factor 12 (261 aa).

The RRM domain maps to 10-88 (TSLFIRNVAD…RQIEIQFAQG (79 aa)). The tract at residues 86-261 (AQGDRKTPGQ…SRSYRHKNSW (176 aa)) is disordered. A compositionally biased stretch (basic and acidic residues) spans 88 to 109 (GDRKTPGQMKSKERHPCSPSDH). 2 stretches are compositionally biased toward basic residues: residues 110-122 (RRSRSPSQRRTRS) and 178-191 (GRSRSKSLQKRSKS). The segment covering 192-209 (IGKSQSSSPQKQTSSGTK) has biased composition (low complexity). Positions 230–239 (GYTNSETKVQ) are enriched in polar residues. Basic residues predominate over residues 240–261 (TAKHSHFRSHSRSRSYRHKNSW).

Belongs to the splicing factor SR family. As to expression, expressed in testis.

Its subcellular location is the nucleus. In terms of biological role, splicing factor that seems to antagonize SR proteins in pre-mRNA splicing regulation. This chain is Serine/arginine-rich splicing factor 12 (SRSF12), found in Homo sapiens (Human).